We begin with the raw amino-acid sequence, 76 residues long: Dolichyl-diphosphooligosaccharide--protein glycosyltransferase subunit OST5 (76 aa).

Transmembrane regions (helical) follow at residues 14-34 and 54-74; these read FYPV…ATFI and ALIA…AGGI.

Belongs to the OST5 family. As to quaternary structure, component of the oligosaccharyltransferase (OST) complex.

It localises to the membrane. In terms of biological role, subunit of the oligosaccharyl transferase (OST) complex that catalyzes the initial transfer of a defined glycan (Glc(3)Man(9)GlcNAc(2) in eukaryotes) from the lipid carrier dolichol-pyrophosphate to an asparagine residue within an Asn-X-Ser/Thr consensus motif in nascent polypeptide chains, the first step in protein N-glycosylation. N-glycosylation occurs cotranslationally and the complex associates with the Sec61 complex at the channel-forming translocon complex that mediates protein translocation across the endoplasmic reticulum (ER). All subunits are required for a maximal enzyme activity. This is Dolichyl-diphosphooligosaccharide--protein glycosyltransferase subunit OST5 from Dictyostelium discoideum (Social amoeba).